Consider the following 322-residue polypeptide: uncharacterized protein (322 aa).

The disordered stretch occupies residues 269-289 (QDEEEEPRDERRPRRRLGKAQ).

This is an uncharacterized protein from Sinorhizobium fredii (strain NBRC 101917 / NGR234).